Reading from the N-terminus, the 327-residue chain is Gonadotropin-releasing hormone receptor (327 aa).

At 1–38 (MANNASLEQDPNHCSAINNSIPLIQGKLPTLTVSGKIR) the chain is on the extracellular side. N-linked (GlcNAc...) asparagine glycans are attached at residues Asn-4 and Asn-18. Residues 39-58 (VTVTFFLFLLSTAFNASFLL) traverse the membrane as a helical segment. At 59–77 (KLQKWTQKRKKGKKLSRMK) the chain is on the cytoplasmic side. The chain crosses the membrane as a helical span at residues 78 to 97 (VLLKHLTLANLLETLIVMPL). Residues 98 to 115 (DGMWNITVQWYAGEFLCK) are Extracellular-facing. Residue Asn-102 is glycosylated (N-linked (GlcNAc...) asparagine). Cys-114 and Cys-195 form a disulfide bridge. A helical transmembrane segment spans residues 116–137 (VLSYLKLFSMYAPAFMMVVISL). Residues 138 to 164 (DRSLAITQPLAVQSNSKLEQSMISLAW) lie on the Cytoplasmic side of the membrane. The helical transmembrane segment at 165-184 (ILSIVFAGPQLYIFRMIYLA) threads the bilayer. At 185 to 211 (DGSGPTVFSQCVTHCSFPQWWHQAFYN) the chain is on the extracellular side. Residues 212-231 (FFTFGCLFIIPLLIMLICNA) form a helical membrane-spanning segment. The Cytoplasmic portion of the chain corresponds to 232-280 (KIIFALTRVLHQDPRKLQLNQSKNNIPRARLRTLKMTVAFATSFVVCWT). The helical transmembrane segment at 281 to 299 (PYYVLGIWYWFDPEMLNRV) threads the bilayer. The Extracellular portion of the chain corresponds to 300 to 305 (SEPVNH). Residues 306–325 (FFFLFAFLNPCFDPLIYGYF) traverse the membrane as a helical segment. Residues 326-327 (SL) are Cytoplasmic-facing.

The protein belongs to the G-protein coupled receptor 1 family. As to expression, pituitary gland.

The protein localises to the cell membrane. Receptor for gonadotropin releasing hormone (GnRH) that mediates the action of GnRH to stimulate the secretion of the gonadotropic hormones luteinizing hormone (LH) and follicle-stimulating hormone (FSH). This receptor mediates its action by association with G-proteins that activate a phosphatidylinositol-calcium second messenger system. This is Gonadotropin-releasing hormone receptor (Gnrhr) from Mus musculus (Mouse).